Consider the following 27-residue polypeptide: Dermaseptin-like peptide (27 aa).

Functionally, has antimicrobial activity against the Gram-positive bacterium M.luteus and the yeast C.albicans. Has hemolytic activity on human and duck erythrocytes. The polypeptide is Dermaseptin-like peptide (Schistosoma mansoni (Blood fluke)).